A 215-amino-acid polypeptide reads, in one-letter code: MRIILLGAPGTGKGTQGKFITEKYKIPQISTGDMLRESVVLKNKIGMIIKNIIEEGKLVSDEIVCHLIKNRIKKHDCINGFILDGFPRTIQQALYLSKKNIKIDYVLEFIIPHEYILERISGRRIHIQSGRIYHVKFKPPKIKDKDDLTGQTLITRKDDTKEGIKKRLEEYKKVHDPLVQYYIHEKKRGNIKFFQIDAMLSFSSIRKKLETILKK.

Residue 10-15 (GTGKGT) participates in ATP binding. Positions 30–59 (STGDMLRESVVLKNKIGMIIKNIIEEGKLV) are NMP. AMP contacts are provided by residues Thr-31, Arg-36, 57–59 (KLV), 85–88 (GFPR), and Gln-92. Positions 122–159 (GRRIHIQSGRIYHVKFKPPKIKDKDDLTGQTLITRKDD) are LID. ATP contacts are provided by residues Arg-123 and 132-133 (IY). Positions 156 and 167 each coordinate AMP. Position 200 (Leu-200) interacts with ATP.

It belongs to the adenylate kinase family. As to quaternary structure, monomer.

It localises to the cytoplasm. The catalysed reaction is AMP + ATP = 2 ADP. It functions in the pathway purine metabolism; AMP biosynthesis via salvage pathway; AMP from ADP: step 1/1. In terms of biological role, catalyzes the reversible transfer of the terminal phosphate group between ATP and AMP. Plays an important role in cellular energy homeostasis and in adenine nucleotide metabolism. The polypeptide is Adenylate kinase (Buchnera aphidicola subsp. Acyrthosiphon pisum (strain 5A)).